The sequence spans 390 residues: Elongation factor Ts, mitochondrial (390 aa).

It belongs to the EF-Ts family.

The protein resides in the mitochondrion. Its function is as follows. Associates with the EF-Tu.GDP complex and induces the exchange of GDP to GTP. It remains bound to the aminoacyl-tRNA.EF-Tu.GTP complex up to the GTP hydrolysis stage on the ribosome. This is Elongation factor Ts, mitochondrial from Plasmodium vivax (strain Salvador I).